Reading from the N-terminus, the 594-residue chain is Putative 3,4-dihydroxy-2-butanone kinase (594 aa).

Positions 11–341 (DPNDVVTEFI…LDAPTKAPNW (331 aa)) constitute a DhaK domain. Residues 62 to 65 (GSGH), Lys113, and Asp118 each bind substrate. The active-site Tele-hemiaminal-histidine intermediate is His226. The interval 339–358 (PNWPVGAEGNRPPAKIPVPL) is disordered. Residues 381–585 (HILETAIEAA…AAAWYRAAAL (205 aa)) form the DhaL domain. ATP is bound by residues 410–413 (DGDC), 455–456 (TS), Gly499, 507–508 (TL), and 570–572 (DPG).

Belongs to the dihydroxyacetone kinase (DAK) family.

The protein is Putative 3,4-dihydroxy-2-butanone kinase (DHBK) of Solanum lycopersicum (Tomato).